Here is a 77-residue protein sequence, read N- to C-terminus: Serine protease inhibitor 2 (77 aa).

The signal sequence occupies residues 1–17; sequence MMFTPLIVLTLLVLATA. Cystine bridges form between Cys-21-Cys-53, Cys-30-Cys-48, Cys-33-Cys-44, Cys-37-Cys-74, and Cys-55-Cys-68. The region spanning 21-74 is the TIL domain; sequence CGPNEQWSDCPKCELQCGESDKPCATICGEPKCYCSPDKYRRIPDGRCIRKIQC.

It is found in the secreted. Functionally, defends the organism against the host's proteinases. This chain is Serine protease inhibitor 2, found in Anisakis simplex (Herring worm).